The chain runs to 199 residues: Recombination protein RecR (199 aa).

The C4-type zinc finger occupies Cys57–Cys72. The 96-residue stretch at Ser81–Pro176 folds into the Toprim domain.

The protein belongs to the RecR family.

May play a role in DNA repair. It seems to be involved in an RecBC-independent recombinational process of DNA repair. It may act with RecF and RecO. The polypeptide is Recombination protein RecR (Shewanella sp. (strain ANA-3)).